A 2130-amino-acid chain; its full sequence is Bromodomain adjacent to zinc finger domain protein 2B (2130 aa).

Disordered regions lie at residues 1–42, 82–118, 151–293, 491–518, 543–633, 756–790, and 944–966; these read MESG…TGAA, LFAP…SLNG, GGRK…QKQP, KTTG…PVSN, VDSD…SSIG, EGRR…GSTE, and RKKA…LNKE. Residues 8–33 show a composition bias toward low complexity; sequence TSSSVSSTAAASSPVSSTPSVASAVS. The segment covering 183–206 has biased composition (low complexity); sequence ESSSNSDSDSGSSSDTSSEGISSS. A compositionally biased stretch (acidic residues) spans 207–234; it reads DSDDLEEDEEEEEDQSAEESEDDESDSE. Basic and acidic residues predominate over residues 250–270; that stretch reads GVKDMKTDGQKAHEKSQEKRT. The span at 272–283 shows a compositional bias: polar residues; it reads QQIPLVSDSQTH. A compositionally biased stretch (low complexity) spans 284-293; that stretch reads SSFQSQQKQP. Residues 492-505 show a composition bias toward polar residues; sequence TTGNRTLVVPSTSP. The span at 543–554 shows a compositional bias: basic and acidic residues; that stretch reads VDSDAPSSKESD. A compositionally biased stretch (acidic residues) spans 555-611; it reads DSNDDDDDDEDEDEDDEDDDSDDSQSESDSNSESDTDGSEDEDDEDDKDQDESDTDT. Positions 623 to 633 are enriched in low complexity; the sequence is TGSSIKSSSIG. Residues 687–762 form the MBD domain; sequence VTDERELRVP…RAMEGRRGRP (76 aa). The segment covering 756-775 has biased composition (basic and acidic residues); it reads EGRRGRPPNPDRQHSREESR. A coiled-coil region spans residues 797–984; sequence AKLLRKLQAQ…ELEMAKELKK (188 aa). One can recognise a DDT domain in the interval 1010–1075; it reads GSTFSDCLMI…VTAAVCDPGL (66 aa). Disordered regions lie at residues 1186 to 1265, 1431 to 1454, 1499 to 1545, and 1773 to 1795; these read TGKR…DQTV, SLCS…NLFS, VTHV…PFAM, and HKKH…ERKN. Over residues 1220 to 1244 the composition is skewed to acidic residues; the sequence is SDYDDDDDDDSDDQADEDDEDEEDK. Over residues 1245–1254 the composition is skewed to basic and acidic residues; the sequence is EDKKGKKAEV. Pro residues predominate over residues 1514–1526; it reads SHPPSKSPSPVPS. The PHD-type zinc finger occupies 1895 to 1945; sequence KVYCQICRKGDNEELLLLCDGCDKGCHTYCHRPKITTIPDGDWFCPACIAK. Residues 1957–2019 form a disordered region; the sequence is QIKGKKSNEQ…KQENFTAIKK (63 aa). Residues 1991–2002 show a composition bias toward basic and acidic residues; that stretch reads GKTEPKKRKMDE. Residues 2004–2014 are compositionally biased toward polar residues; it reads VSVSQGKQENF. The Bromo domain maps to 2022–2126; that stretch reads RDDSKDLAIC…KYFEKKWTEI (105 aa).

Belongs to the WAL family.

Its subcellular location is the nucleus. Functionally, regulatory subunit of the ATP-dependent BRF-1 and BRF-5 ISWI chromatin remodeling complexes, which form ordered nucleosome arrays on chromatin and facilitate access to DNA during DNA-templated processes such as DNA replication, transcription, and repair. Both complexes regulate the spacing of nucleosomes along the chromatin and have the ability to slide mononucleosomes to the center of a DNA template. The BRF-1 ISWI chromatin remodeling complex has a lower ATP hydrolysis rate than the BRF-5 ISWI chromatin remodeling complex. Chromatin reader protein. Represses the expression of mitochondrial function-related genes, perhaps by transcriptional regulation. The chain is Bromodomain adjacent to zinc finger domain protein 2B (BAZ2B) from Gallus gallus (Chicken).